The sequence spans 565 residues: Dihydroxy-acid dehydratase (565 aa).

D83 lines the Mg(2+) pocket. C124 contributes to the [2Fe-2S] cluster binding site. Mg(2+) is bound by residues D125 and K126. An N6-carboxylysine modification is found at K126. Residue C197 participates in [2Fe-2S] cluster binding. Mg(2+) is bound at residue E451. S477 serves as the catalytic Proton acceptor.

This sequence belongs to the IlvD/Edd family. As to quaternary structure, homodimer. It depends on [2Fe-2S] cluster as a cofactor. Mg(2+) is required as a cofactor.

The catalysed reaction is (2R)-2,3-dihydroxy-3-methylbutanoate = 3-methyl-2-oxobutanoate + H2O. The enzyme catalyses (2R,3R)-2,3-dihydroxy-3-methylpentanoate = (S)-3-methyl-2-oxopentanoate + H2O. The protein operates within amino-acid biosynthesis; L-isoleucine biosynthesis; L-isoleucine from 2-oxobutanoate: step 3/4. Its pathway is amino-acid biosynthesis; L-valine biosynthesis; L-valine from pyruvate: step 3/4. In terms of biological role, functions in the biosynthesis of branched-chain amino acids. Catalyzes the dehydration of (2R,3R)-2,3-dihydroxy-3-methylpentanoate (2,3-dihydroxy-3-methylvalerate) into 2-oxo-3-methylpentanoate (2-oxo-3-methylvalerate) and of (2R)-2,3-dihydroxy-3-methylbutanoate (2,3-dihydroxyisovalerate) into 2-oxo-3-methylbutanoate (2-oxoisovalerate), the penultimate precursor to L-isoleucine and L-valine, respectively. This is Dihydroxy-acid dehydratase from Symbiobacterium thermophilum (strain DSM 24528 / JCM 14929 / IAM 14863 / T).